The following is a 145-amino-acid chain: Ribonuclease VapC48 (145 aa).

Residues Asp-6 and Asp-109 each contribute to the Mg(2+) site. The PINc domain occupies 15–141 (HRASPFHDKA…RKFEGIRIRD (127 aa)).

The protein belongs to the PINc/VapC protein family. Mg(2+) serves as cofactor.

Its function is as follows. Toxic component of a type II toxin-antitoxin (TA) system. An RNase. Its cognate antitoxin is VapB48. This is Ribonuclease VapC48 from Mycobacterium tuberculosis (strain CDC 1551 / Oshkosh).